Here is a 134-residue protein sequence, read N- to C-terminus: Transmembrane protein 100 (134 aa).

Phosphoserine is present on Ser-15. 2 helical membrane-spanning segments follow: residues 56-76 (CVIPFAVVVLITGTVVTAVAY) and 84-104 (IISILGLVLLSLGLFLLASSA). Ser-121 is modified (phosphoserine).

As to quaternary structure, interacts (via C-terminus) with TRPA1 and TRPV1. Interacts with TASOR.

The protein localises to the cell membrane. Its subcellular location is the membrane. It localises to the perikaryon. It is found in the cytoplasm. The protein resides in the perinuclear region. The protein localises to the endoplasmic reticulum. Plays a role during embryonic arterial endothelium differentiation and vascular morphogenesis through the ACVRL1 receptor-dependent signaling pathway upon stimulation by bone morphogenetic proteins, such as GDF2/BMP9 and BMP10. Involved in the regulation of nociception, acting as a modulator of the interaction between TRPA1 and TRPV1, two molecular sensors and mediators of pain signals in dorsal root ganglia (DRG) neurons. Mechanistically, it weakens their interaction, thereby releasing the inhibition of TRPA1 by TRPV1 and increasing the single-channel open probability of the TRPA1-TRPV1 complex. In Bos taurus (Bovine), this protein is Transmembrane protein 100 (TMEM100).